Consider the following 301-residue polypeptide: Probable aspartoacylase (301 aa).

2 residues coordinate Zn(2+): histidine 13 and glutamate 16. Substrate is bound by residues arginine 54 and 61 to 62 (NR). Histidine 105 serves as a coordination point for Zn(2+). Substrate is bound by residues glutamate 163 and tyrosine 273.

Belongs to the AspA/AstE family. Aspartoacylase subfamily. Zn(2+) is required as a cofactor.

The catalysed reaction is an N-acyl-L-aspartate + H2O = a carboxylate + L-aspartate. This chain is Probable aspartoacylase, found in Prochlorococcus marinus (strain MIT 9215).